The following is a 134-amino-acid chain: MGRDIIADIITSIRNADMDRKRAVRIASTNITENIVKILLREGFIENVRKHKETKKDFLVLTLRHRRNRKRSYRNFLNLKRISRPGLRIYSNYQRIPRILGGMGIVIISTSRGIMTDREARLERIGGEVLCYIW.

It belongs to the universal ribosomal protein uS8 family. In terms of assembly, part of the 30S ribosomal subunit.

Its subcellular location is the plastid. The protein localises to the chloroplast. One of the primary rRNA binding proteins, it binds directly to 16S rRNA central domain where it helps coordinate assembly of the platform of the 30S subunit. The polypeptide is Small ribosomal subunit protein uS8c (rps8) (Daucus carota (Wild carrot)).